The following is a 183-amino-acid chain: Endoribonuclease YbeY (183 aa).

The Zn(2+) site is built by H143, H147, and H153.

This sequence belongs to the endoribonuclease YbeY family. Requires Zn(2+) as cofactor.

It is found in the cytoplasm. Functionally, single strand-specific metallo-endoribonuclease involved in late-stage 70S ribosome quality control and in maturation of the 3' terminus of the 16S rRNA. This Rickettsia bellii (strain RML369-C) protein is Endoribonuclease YbeY.